The following is a 339-amino-acid chain: Tetraacyldisaccharide 4'-kinase (339 aa).

62 to 69 (VAGGTGKT) provides a ligand contact to ATP.

It belongs to the LpxK family.

The catalysed reaction is a lipid A disaccharide + ATP = a lipid IVA + ADP + H(+). It functions in the pathway glycolipid biosynthesis; lipid IV(A) biosynthesis; lipid IV(A) from (3R)-3-hydroxytetradecanoyl-[acyl-carrier-protein] and UDP-N-acetyl-alpha-D-glucosamine: step 6/6. Transfers the gamma-phosphate of ATP to the 4'-position of a tetraacyldisaccharide 1-phosphate intermediate (termed DS-1-P) to form tetraacyldisaccharide 1,4'-bis-phosphate (lipid IVA). The polypeptide is Tetraacyldisaccharide 4'-kinase (Xylella fastidiosa (strain M12)).